The sequence spans 193 residues: MADAYTPRFRKLYDETIVKAMTEKFGYKNHMEVPKITKIVLNMGVGEATQDKKKVEQAALEMTKIAGQKAVITKAKKSIAQFKLREGMPIGAKVTLRRERMYEFLDRFVTIALPRVRDFRGLNPKSFDGRGNYATGLKEQLIFPEISYDSVDKIRGMDVIVATTAKTDDEARELLRLFGFPFPADNEDQKQAA.

It belongs to the universal ribosomal protein uL5 family. In terms of assembly, part of the 50S ribosomal subunit; part of the 5S rRNA/L5/L18/L25 subcomplex. Contacts the 5S rRNA and the P site tRNA. Forms a bridge to the 30S subunit in the 70S ribosome.

Functionally, this is one of the proteins that bind and probably mediate the attachment of the 5S RNA into the large ribosomal subunit, where it forms part of the central protuberance. In the 70S ribosome it contacts protein S13 of the 30S subunit (bridge B1b), connecting the 2 subunits; this bridge is implicated in subunit movement. Contacts the P site tRNA; the 5S rRNA and some of its associated proteins might help stabilize positioning of ribosome-bound tRNAs. This is Large ribosomal subunit protein uL5 from Rhizorhabdus wittichii (strain DSM 6014 / CCUG 31198 / JCM 15750 / NBRC 105917 / EY 4224 / RW1) (Sphingomonas wittichii).